The primary structure comprises 64 residues: H/ACA ribonucleoprotein complex subunit 3-like protein (64 aa).

Belongs to the NOP10 family. Component of the small nucleolar ribonucleoprotein particles containing H/ACA-type snoRNAs (H/ACA snoRNPs).

The protein resides in the nucleus. It localises to the nucleolus. Functionally, required for ribosome biogenesis. Part of a complex which catalyzes pseudouridylation of rRNA. This involves the isomerization of uridine such that the ribose is subsequently attached to C5, instead of the normal N1. Pseudouridine ('psi') residues may serve to stabilize the conformation of rRNAs. This Arabidopsis thaliana (Mouse-ear cress) protein is H/ACA ribonucleoprotein complex subunit 3-like protein.